Consider the following 293-residue polypeptide: Fructose-bisphosphate aldolase (293 aa).

Residue S50 participates in D-glyceraldehyde 3-phosphate binding. The active-site Proton donor is D85. Positions 86, 106, 136, and 178 each coordinate Zn(2+). G179 is a dihydroxyacetone phosphate binding site. A Zn(2+)-binding site is contributed by H208. Residues G209 to S211 and N230 to T233 each bind dihydroxyacetone phosphate.

It belongs to the class II fructose-bisphosphate aldolase family. It depends on Zn(2+) as a cofactor.

The enzyme catalyses beta-D-fructose 1,6-bisphosphate = D-glyceraldehyde 3-phosphate + dihydroxyacetone phosphate. It functions in the pathway carbohydrate degradation; glycolysis; D-glyceraldehyde 3-phosphate and glycerone phosphate from D-glucose: step 4/4. In terms of biological role, catalyzes the aldol condensation of dihydroxyacetone phosphate (DHAP or glycerone-phosphate) with glyceraldehyde 3-phosphate (G3P) to form fructose 1,6-bisphosphate (FBP) in gluconeogenesis and the reverse reaction in glycolysis. The polypeptide is Fructose-bisphosphate aldolase (fba) (Streptococcus pneumoniae serotype 4 (strain ATCC BAA-334 / TIGR4)).